The following is a 374-amino-acid chain: Eukaryotic translation initiation factor 3 subunit M (374 aa).

Residues 180 to 339 form the PCI domain; that stretch reads TAAKVMVELL…RKVVVSHSTH (160 aa).

This sequence belongs to the eIF-3 subunit M family. As to quaternary structure, component of the eukaryotic translation initiation factor 3 (eIF-3) complex, which is composed of 13 subunits: EIF3A, EIF3B, EIF3C, EIF3D, EIF3E, EIF3F, EIF3G, EIF3H, EIF3I, EIF3J, EIF3K, EIF3L and EIF3M.

The protein localises to the cytoplasm. Functionally, component of the eukaryotic translation initiation factor 3 (eIF-3) complex, which is involved in protein synthesis of a specialized repertoire of mRNAs and, together with other initiation factors, stimulates binding of mRNA and methionyl-tRNAi to the 40S ribosome. The eIF-3 complex specifically targets and initiates translation of a subset of mRNAs involved in cell proliferation. The polypeptide is Eukaryotic translation initiation factor 3 subunit M (Gallus gallus (Chicken)).